A 102-amino-acid chain; its full sequence is UPF0235 protein msl4154 (102 aa).

The protein belongs to the UPF0235 family.

The protein is UPF0235 protein msl4154 of Mesorhizobium japonicum (strain LMG 29417 / CECT 9101 / MAFF 303099) (Mesorhizobium loti (strain MAFF 303099)).